A 583-amino-acid polypeptide reads, in one-letter code: Ribonuclease ZC3H12A (583 aa).

Residues 1 to 11 are compositionally biased toward basic and acidic residues; it reads MSLWELEDRRS. 2 disordered regions span residues 1-29 and 73-119; these read MSLWELEDRRSCQGTPRPAQEPTAEEATT and GSAA…GSDL. Residues 15–29 are compositionally biased toward low complexity; sequence TPRPAQEPTAEEATT. The ubiquitin association domain stretch occupies residues 26–71; sequence EATTAELQMKVDFFRKLGYSSAEIHSVLQKLGIQADTNTVLGELVK. Residues 65-134 form a necessary for interaction with TANK region; it reads VLGELVKHGS…DGSNVAMSHG (70 aa). Residues 73–82 are compositionally biased toward basic and acidic residues; it reads GSAAERERQA. Ser-83 carries the post-translational modification Phosphoserine. Residues 96–281 form an RNase region; the sequence is GGGTPKAPTV…LDNFLRKKPL (186 aa). Positions 119–274 constitute an RNase NYN domain; sequence LRPIVIDGSN…LGRHGPSLDN (156 aa). Residues 198 to 204 are RNA binding; the sequence is RRVGGKR. Asp-210 lines the Mg(2+) pocket. 2 disordered regions span residues 262–290 and 323–404; these read DDPLGRHGPSLDNFLRKKPLTSEHKKQPC and ANAL…PSEW. The segment at 284-309 adopts a C3H1-type zinc-finger fold; sequence EHKKQPCPYGRKCTYGIKCRFLHPER. Positions 285-441 are necessary for interaction with ZC3H12D; sequence HKKQPCPYGR…SELWGVRGGG (157 aa). A compositionally biased stretch (low complexity) spans 341–352; that stretch reads RPSPSSQPGSLP. A compositionally biased stretch (basic and acidic residues) spans 353–364; the sequence is TEHEQCSPDRKK. Over residues 384 to 393 the composition is skewed to low complexity; that stretch reads PTGRSLPPSG. 2 positions are modified to phosphoserine: Ser-422 and Ser-426. Residues 503-530 form a disordered region; the sequence is YQLPPPTQRLQEPQAPGPGADRGPWGGA.

It belongs to the ZC3H12 family. Oligomer. Found in a deubiquitination complex with TANK, USP10 and ZC3H12A; this complex inhibits genotoxic stress- or interleukin-1-beta-mediated NF-kappaB activation by promoting IKBKG or TRAF6 deubiquitination. Interacts with IKBKG; this interaction increases in response to DNA damage. Interacts with TANK; this interaction increases in response to DNA damage and serves as a bridge to anchor both TANK and USP10 into a deubiquitinating complex. Interacts with TRAF6; this interaction increases in response to DNA damage and is stimulated by TANK. Interacts with USP10; this interaction increases in response to DNA damage and serves as a bridge to anchor both TANK and USP10 into a deubiquitinating complex. Interacts with ZC3H12D. Interacts with TNRC6A. Interacts with IKBKB/IKKB. Interacts with IKBKB/IKKB. Interacts with BTRC; the interaction occurs when ZC3H12A is phosphorylated in a IKBKB/IKKB-dependent manner. Interacts with IRAK1; this interaction increases the interaction between ZC3H12A and IKBKB/IKKB. Interacts with UPF1; this interaction occurs in a mRNA translationally active- and termination-dependent manner and is essential for ZC3H12A-mediated degradation of target mRNAs. Associates with ribosomes. Interacts with ubiquitin. Mg(2+) is required as a cofactor. Post-translationally, phosphorylated by IRAK1; phosphorylation is necessary for subsequent phosphorylation by the I-kappa-B-kinase (IKK) complex. Phosphorylated by I-kappa-B-kinase (IKK) subunits IKBKB/IKKB and CHUK/IKKA at Ser-422 and Ser-426; these phosphorylations promote ubiquitin proteasome-mediated degradation of ZC3H12A and hence facilitates rapid and robust production of IL-6 mRNA in response to toll-like receptor (TLR) or IL-1 receptor stimuli. Ubiquitinated; ubiquitination is induced in response to interleukin IL1 receptor stimuli in a IKBKB/IKKB and IRAK1-dependent manner, leading to proteasome-mediated degradation. In terms of processing, proteolytically cleaved between Arg-95 and Arg-198 by MALT1 in activated T-cells; cleavage at Arg-95 is critical for promoting ZC3H12A degradation in response to T-cell receptor (TCR) stimulation, and hence is necessary for prolonging the stability of a set of mRNAs controlling T-cell activation and Th17 cell differentiation.

The protein resides in the nucleus. Its subcellular location is the cytoplasm. The protein localises to the P-body. It localises to the rough endoplasmic reticulum membrane. It is found in the cytoplasmic granule. Endoribonuclease involved in various biological functions such as cellular inflammatory response and immune homeostasis, glial differentiation of neuroprogenitor cells, cell death of cardiomyocytes, adipogenesis and angiogenesis. Functions as an endoribonuclease involved in mRNA decay. Modulates the inflammatory response by promoting the degradation of a set of translationally active cytokine-induced inflammation-related mRNAs, such as IL6 and IL12B, during the early phase of inflammation. Prevents aberrant T-cell-mediated immune reaction by degradation of multiple mRNAs controlling T-cell activation, such as those encoding cytokines (IL6 and IL2), cell surface receptors (ICOS, TNFRSF4 and TNFR2) and transcription factor (REL). Inhibits cooperatively with ZC3H12A the differentiation of helper T cells Th17 in lungs. They repress target mRNA encoding the Th17 cell-promoting factors IL6, ICOS, REL, IRF4, NFKBID and NFKBIZ. The cooperation requires RNA-binding by RC3H1 and the nuclease activity of ZC3H12A. Together with RC3H1, destabilizes TNFRSF4/OX40 mRNA by binding to the conserved stem loop structure in its 3'UTR. Self regulates by destabilizing its own mRNA. Cleaves mRNA harboring a stem-loop (SL), often located in their 3'-UTRs, during the early phase of inflammation in a helicase UPF1-dependent manner. Plays a role in the inhibition of microRNAs (miRNAs) biogenesis. Cleaves the terminal loop of a set of precursor miRNAs (pre-miRNAs) important for the regulation of the inflammatory response leading to their degradation, and thus preventing the biosynthesis of mature miRNAs. Also plays a role in promoting angiogenesis in response to inflammatory cytokines by inhibiting the production of antiangiogenic microRNAs via its anti-dicer RNase activity. Affects the overall ubiquitination of cellular proteins. Positively regulates deubiquitinase activity promoting the cleavage at 'Lys-48'- and 'Lys-63'-linked polyubiquitin chains on TNF receptor-associated factors (TRAFs), preventing JNK and NF-kappa-B signaling pathway activation, and hence negatively regulating macrophage-mediated inflammatory response and immune homeostasis. Also induces deubiquitination of the transcription factor HIF1A, probably leading to its stabilization and nuclear import, thereby positively regulating the expression of proangiogenic HIF1A-targeted genes. Involved in a TANK-dependent negative feedback response to attenuate NF-kappaB activation through the deubiquitination of IKBKG or TRAF6 in response to interleukin-1-beta (IL1B) stimulation or upon DNA damage. Prevents stress granules (SGs) formation and promotes macrophage apoptosis under stress conditions, including arsenite-induced oxidative stress, heat shock, and energy deprivation. Plays a role in the regulation of macrophage polarization; promotes IL4-induced polarization of macrophages M1 into anti-inflammatory M2 state. May also act as a transcription factor that regulates the expression of multiple genes involved in inflammatory response, angiogenesis, adipogenesis and apoptosis. Functions as a positive regulator of glial differentiation of neuroprogenitor cells through an amyloid precursor protein (APP)-dependent signaling pathway. Attenuates septic myocardial contractile dysfunction in response to lipopolysaccharide (LPS) by reducing I-kappa-B-kinase (IKK)-mediated NF-kappa-B activation, and hence myocardial pro-inflammatory cytokine production. The protein is Ribonuclease ZC3H12A of Bos taurus (Bovine).